The primary structure comprises 280 residues: Energy-coupling factor transporter ATP-binding protein EcfA2 (280 aa).

Residues 3-245 (ISLENVSYTY…VAFLKEKQLG (243 aa)) form the ABC transporter domain. An ATP-binding site is contributed by 40-47 (GHTGSGKS).

This sequence belongs to the ABC transporter superfamily. Energy-coupling factor EcfA family. Forms a stable energy-coupling factor (ECF) transporter complex composed of 2 membrane-embedded substrate-binding proteins (S component), 2 ATP-binding proteins (A component) and 2 transmembrane proteins (T component).

The protein localises to the cell membrane. Functionally, ATP-binding (A) component of a common energy-coupling factor (ECF) ABC-transporter complex. Unlike classic ABC transporters this ECF transporter provides the energy necessary to transport a number of different substrates. The sequence is that of Energy-coupling factor transporter ATP-binding protein EcfA2 from Streptococcus thermophilus (strain CNRZ 1066).